A 114-amino-acid polypeptide reads, in one-letter code: Ribulose bisphosphate carboxylase small subunit 2 (114 aa).

This sequence belongs to the RuBisCO small chain family. Heterohexadecamer of 8 large and 8 small subunits. Forms a CsoS2-CsoS1-RuBisCO complex.

It localises to the carboxysome. In terms of biological role, ruBisCO catalyzes two reactions: the carboxylation of D-ribulose 1,5-bisphosphate, the primary event in carbon dioxide fixation, as well as the oxidative fragmentation of the pentose substrate. Both reactions occur simultaneously and in competition at the same active site. Although the small subunit is not catalytic it is essential for maximal activity. Functionally, replacing the endogenous type I ccbLS genes in H.neapolitanus with this carboxysomally targeted enzyme reconstitutes RuBisCO with about 25% of normal activity; the active enzyme is targeted to carboxysomes. In Hydrogenovibrio crunogenus (strain DSM 25203 / XCL-2) (Thiomicrospira crunogena), this protein is Ribulose bisphosphate carboxylase small subunit 2.